We begin with the raw amino-acid sequence, 573 residues long: MSNPPHGGVLKDLIARDLPRHAELEAEAETLPALLLSERQLCDLELILNGGFSPLEGFMNQEDYNDVVKENRLASGLLFSMPITLDVSEETISELGLKAGARITLRDFRDDRNLAILTVDDVYKPDKALEAKEVFGGDEEHPAVKFLYETAKEYYVGGKLEAVNKLQHYDFVDLRYSPAEIRTHFDKLGWSRVVAFQTRNPMHRAHRELTVRAARSHHANVLIHPVVGLTKPGDIDHFTRVRVYKALLPRYPNGMAVLGLLPLAMRMGGPREAIWHAIIRKNHGATHFIVGRDHAGPGKNSKGVDFYGPYDAQYAVEKYRDELGIEVVPFQMMTYLPDSDEYAPVDQIPKGVRTLNISGTELRARLRSGREIPEWFSYPEVVKVLRESHPPRSQQGFTVLFTGYPNSGKDQIARALQVTLNQQGGRSVSLFLGENIRHELSSELGYNREDRDKNIARIAFVASELTRSGAAVIAAPIAPFEKARQNARELVEKYGDFYLVHVATPLEYCEKTDKRGIYAKARAGEIENFTGVNDPYETPAKPDLVVDCEKQSVRSIVHQIILLLESQGLLDRF.

The interval 1 to 169 (MSNPPHGGVL…LEAVNKLQHY (169 aa)) is N-terminal. The tract at residues 170-394 (DFVDLRYSPA…LRESHPPRSQ (225 aa)) is catalytic. Q197 provides a ligand contact to sulfate. ATP is bound by residues 197-200 (QTRN) and 291-294 (GRDH). Residues T198, R199, and N200 contribute to the active site. Residue R199 participates in sulfate binding. A295 contributes to the sulfate binding site. An ATP-binding site is contributed by M333. An allosteric regulation domain; adenylyl-sulfate kinase-like region spans residues 395–573 (QGFTVLFTGY…LESQGLLDRF (179 aa)). 3'-phosphoadenylyl sulfate contacts are provided by residues 434–437 (ENIR), R451, 477–478 (IA), and R515.

This sequence in the N-terminal section; belongs to the sulfate adenylyltransferase family. The protein in the C-terminal section; belongs to the APS kinase family. In terms of assembly, homohexamer. Dimer of trimers.

Its subcellular location is the cytoplasm. The enzyme catalyses sulfate + ATP + H(+) = adenosine 5'-phosphosulfate + diphosphate. It functions in the pathway sulfur metabolism; hydrogen sulfide biosynthesis; sulfite from sulfate: step 1/3. Allosterically inhibited by 3'-phosphoadenosine 5'-phosphosulfate (PAPS). Its function is as follows. Catalyzes the first intracellular reaction of sulfate assimilation, forming adenosine-5'-phosphosulfate (APS) from inorganic sulfate and ATP. Plays an important role in sulfate activation as a component of the biosynthesis pathway of sulfur-containing amino acids. This chain is Sulfate adenylyltransferase (cys-11), found in Neurospora crassa (strain ATCC 24698 / 74-OR23-1A / CBS 708.71 / DSM 1257 / FGSC 987).